We begin with the raw amino-acid sequence, 391 residues long: 3-ketoacyl-CoA thiolase (391 aa).

Cys95 acts as the Acyl-thioester intermediate in catalysis. Catalysis depends on proton acceptor residues His347 and Cys377.

This sequence belongs to the thiolase-like superfamily. Thiolase family. As to quaternary structure, heterotetramer of two alpha chains (FadB) and two beta chains (FadA).

The protein resides in the cytoplasm. The catalysed reaction is an acyl-CoA + acetyl-CoA = a 3-oxoacyl-CoA + CoA. Its pathway is lipid metabolism; fatty acid beta-oxidation. Its function is as follows. Catalyzes the final step of fatty acid oxidation in which acetyl-CoA is released and the CoA ester of a fatty acid two carbons shorter is formed. This Pseudomonas fluorescens (strain Pf0-1) protein is 3-ketoacyl-CoA thiolase.